The primary structure comprises 267 residues: Putative phosphatase bbp_030 (267 aa).

Catalysis depends on D8, which acts as the Nucleophile. D8 lines the Mg(2+) pocket. L9 serves as a coordination point for phosphate. D10 contacts Mg(2+). Phosphate-binding positions include 42 to 43 and K191; that span reads TG. D214 lines the Mg(2+) pocket. N217 serves as a coordination point for phosphate.

It belongs to the HAD-like hydrolase superfamily. Cof family. Mg(2+) serves as cofactor.

This is Putative phosphatase bbp_030 from Buchnera aphidicola subsp. Baizongia pistaciae (strain Bp).